A 102-amino-acid chain; its full sequence is A-type ATP synthase subunit F (102 aa).

The protein belongs to the V-ATPase F subunit family. In terms of assembly, has multiple subunits with at least A(3), B(3), C, D, E, F, H, I and proteolipid K(x).

It is found in the cell membrane. Component of the A-type ATP synthase that produces ATP from ADP in the presence of a proton gradient across the membrane. The chain is A-type ATP synthase subunit F from Thermococcus sibiricus (strain DSM 12597 / MM 739).